The sequence spans 555 residues: CTL-like protein DDB_G0274487 (555 aa).

Polar residues predominate over residues 1–17; that stretch reads MGIEDNSQQPNTGSPYG. The interval 1–101 is disordered; it reads MGIEDNSQQP…NLNKANDRES (101 aa). Residues 19–63 show a composition bias toward low complexity; it reads SPPSQYNPYGQQPPQQQQYNPYGEQQQQPQQQQQYGYQPQFQPTY. The segment covering 79–90 has biased composition (pro residues); sequence PFPPQQQQPPPI. An N-linked (GlcNAc...) asparagine glycan is attached at asparagine 116. A helical membrane pass occupies residues 138–158; it reads IWFSILFGLNFGLLIVVSASA. The N-linked (GlcNAc...) asparagine glycan is linked to asparagine 174. 10 helical membrane passes run 182 to 202, 210 to 230, 231 to 251, 284 to 304, 313 to 333, 340 to 360, 372 to 392, 405 to 425, 472 to 492, and 493 to 513; these read FLFA…WAWL, ESLI…YCVF, FFVW…FFII, AGYV…SAFA, AIQT…FHVI, TVSG…VGMP, LTTS…IETL, VVVK…SSIV, IAIG…LISI, and PFDM…LVII.

It belongs to the CTL (choline transporter-like) family.

It localises to the membrane. This is CTL-like protein DDB_G0274487 from Dictyostelium discoideum (Social amoeba).